The sequence spans 178 residues: Interleukin-10 (178 aa).

Residues 1–18 (MHSSALLCCLVLLTGVRA) form the signal peptide. Disulfide bonds link Cys30-Cys126 and Cys80-Cys132. A glycan (N-linked (GlcNAc...) asparagine) is linked at Asn134.

It belongs to the IL-10 family. Homodimer. Interacts with IL10RA and IL10RB.

The protein localises to the secreted. In terms of biological role, major immune regulatory cytokine that acts on many cells of the immune system where it has profound anti-inflammatory functions, limiting excessive tissue disruption caused by inflammation. Mechanistically, IL10 binds to its heterotetrameric receptor comprising IL10RA and IL10RB leading to JAK1 and STAT2-mediated phosphorylation of STAT3. In turn, STAT3 translocates to the nucleus where it drives expression of anti-inflammatory mediators. Targets antigen-presenting cells (APCs) such as macrophages and monocytes and inhibits their release of pro-inflammatory cytokines including granulocyte-macrophage colony-stimulating factor /GM-CSF, granulocyte colony-stimulating factor/G-CSF, IL-1 alpha, IL-1 beta, IL-6, IL-8 and TNF-alpha. Also interferes with antigen presentation by reducing the expression of MHC-class II and co-stimulatory molecules, thereby inhibiting their ability to induce T cell activation. In addition, controls the inflammatory response of macrophages by reprogramming essential metabolic pathways including mTOR signaling. The protein is Interleukin-10 (IL10) of Macaca nemestrina (Pig-tailed macaque).